The primary structure comprises 138 residues: uncharacterized protein (138 aa).

This is an uncharacterized protein from Saccharomyces cerevisiae (strain ATCC 204508 / S288c) (Baker's yeast).